Reading from the N-terminus, the 308-residue chain is MRSRGVKYVSVRARLARSRVLAYLALTKPRVIELLLVTAIPAMLLADRGSANPLLILNTLLGGISAAAGANTFNCVADADIDKLMKRTSRRPLARAAVPPRNALVLGLALTAGSFFWLWWTTNLLSGLLALATVAFYVFVYTLLLKRRTSQNVVWGGAAGCMPVMIGWSAITDTIGWPALAMFAIIFFWTPPHTWALAMRYKDDYKVASVPMLPAVATERHVTKQILIYTWLTALSTLVLALATGWLYMAVAVVAGAWFLTMAHQLYVGVCAGEPVKPLRLFLQSNNYLAVVFCALAVDSVLALPTLF.

A run of 9 helical transmembrane segments spans residues 20-40 (VLAY…VTAI), 53-73 (PLLI…ANTF), 102-122 (NALV…WWTT), 124-144 (LLSG…YTLL), 149-169 (TSQN…IGWS), 170-190 (AITD…FFWT), 227-249 (LIYT…WLYM), 254-276 (VAGA…GEPV), and 288-308 (YLAV…PTLF).

Belongs to the UbiA prenyltransferase family. Protoheme IX farnesyltransferase subfamily.

Its subcellular location is the cell membrane. It carries out the reaction heme b + (2E,6E)-farnesyl diphosphate + H2O = Fe(II)-heme o + diphosphate. It functions in the pathway porphyrin-containing compound metabolism; heme O biosynthesis; heme O from protoheme: step 1/1. Functionally, converts heme B (protoheme IX) to heme O by substitution of the vinyl group on carbon 2 of heme B porphyrin ring with a hydroxyethyl farnesyl side group. This is Protoheme IX farnesyltransferase from Mycobacterium leprae (strain TN).